We begin with the raw amino-acid sequence, 542 residues long: Probable myosin-binding protein 6 (542 aa).

The N-terminal stretch at 1 to 21 is a signal peptide; that stretch reads MYIQLLCFFLFLFLLLQATMS. Residues 39-59 form a helical membrane-spanning segment; sequence FLIYTVLEWSLIVFLFIDGVI. Residues 219–239 are disordered; that stretch reads SFLAPAPSPRVSHNKLSENES. Residues 300 to 398 enclose the GTD-binding domain; the sequence is SILNQLKKEV…ELEAEFEVYR (99 aa). The disordered stretch occupies residues 419–480; sequence GNASAYDDCQ…DEEKGSESKE (62 aa). Over residues 437–456 the composition is skewed to polar residues; that stretch reads AVSSSNQQENGENIDQNGQS. Over residues 471-480 the composition is skewed to basic and acidic residues; it reads DEEKGSESKE.

It is found in the membrane. In terms of biological role, probable membrane-anchored myosin receptors. The chain is Probable myosin-binding protein 6 from Arabidopsis thaliana (Mouse-ear cress).